The chain runs to 393 residues: NAD(P)H-quinone oxidoreductase subunit H, chloroplastic (393 aa).

Belongs to the complex I 49 kDa subunit family. As to quaternary structure, NDH is composed of at least 16 different subunits, 5 of which are encoded in the nucleus.

The protein localises to the plastid. The protein resides in the chloroplast thylakoid membrane. The catalysed reaction is a plastoquinone + NADH + (n+1) H(+)(in) = a plastoquinol + NAD(+) + n H(+)(out). It catalyses the reaction a plastoquinone + NADPH + (n+1) H(+)(in) = a plastoquinol + NADP(+) + n H(+)(out). NDH shuttles electrons from NAD(P)H:plastoquinone, via FMN and iron-sulfur (Fe-S) centers, to quinones in the photosynthetic chain and possibly in a chloroplast respiratory chain. The immediate electron acceptor for the enzyme in this species is believed to be plastoquinone. Couples the redox reaction to proton translocation, and thus conserves the redox energy in a proton gradient. This is NAD(P)H-quinone oxidoreductase subunit H, chloroplastic from Guizotia abyssinica (Niger).